The sequence spans 216 residues: Probable chemoreceptor glutamine deamidase CheD (216 aa).

This sequence belongs to the CheD family.

It catalyses the reaction L-glutaminyl-[protein] + H2O = L-glutamyl-[protein] + NH4(+). Probably deamidates glutamine residues to glutamate on methyl-accepting chemotaxis receptors (MCPs), playing an important role in chemotaxis. In Halorhodospira halophila (strain DSM 244 / SL1) (Ectothiorhodospira halophila (strain DSM 244 / SL1)), this protein is Probable chemoreceptor glutamine deamidase CheD.